Consider the following 114-residue polypeptide: Iron-sulfur cluster insertion protein ErpA (114 aa).

Residues Cys42, Cys106, and Cys108 each contribute to the iron-sulfur cluster site.

Belongs to the HesB/IscA family. As to quaternary structure, homodimer. Iron-sulfur cluster serves as cofactor.

Required for insertion of 4Fe-4S clusters for at least IspG. The protein is Iron-sulfur cluster insertion protein ErpA of Citrobacter koseri (strain ATCC BAA-895 / CDC 4225-83 / SGSC4696).